Reading from the N-terminus, the 903-residue chain is Protein translocase subunit SecA (903 aa).

ATP contacts are provided by residues Q87, 105–109, and D507; that span reads GEGKT. A disordered region spans residues 854–893; that stretch reads STMADSSGDVKSSTAESKAPYVRDGRKVGRNEPCPCGSGK. The span at 856–869 shows a compositional bias: polar residues; the sequence is MADSSGDVKSSTAE. A compositionally biased stretch (basic and acidic residues) spans 874–883; the sequence is YVRDGRKVGR. C887, C889, C898, and H899 together coordinate Zn(2+).

The protein belongs to the SecA family. As to quaternary structure, monomer and homodimer. Part of the essential Sec protein translocation apparatus which comprises SecA, SecYEG and auxiliary proteins SecDF-YajC and YidC. Zn(2+) serves as cofactor.

It localises to the cell inner membrane. The protein resides in the cytoplasm. The enzyme catalyses ATP + H2O + cellular proteinSide 1 = ADP + phosphate + cellular proteinSide 2.. Part of the Sec protein translocase complex. Interacts with the SecYEG preprotein conducting channel. Has a central role in coupling the hydrolysis of ATP to the transfer of proteins into and across the cell membrane, serving both as a receptor for the preprotein-SecB complex and as an ATP-driven molecular motor driving the stepwise translocation of polypeptide chains across the membrane. This is Protein translocase subunit SecA from Nitrosococcus oceani (strain ATCC 19707 / BCRC 17464 / JCM 30415 / NCIMB 11848 / C-107).